A 152-amino-acid polypeptide reads, in one-letter code: SsrA-binding protein (152 aa).

The protein belongs to the SmpB family.

Its subcellular location is the cytoplasm. Required for rescue of stalled ribosomes mediated by trans-translation. Binds to transfer-messenger RNA (tmRNA), required for stable association of tmRNA with ribosomes. tmRNA and SmpB together mimic tRNA shape, replacing the anticodon stem-loop with SmpB. tmRNA is encoded by the ssrA gene; the 2 termini fold to resemble tRNA(Ala) and it encodes a 'tag peptide', a short internal open reading frame. During trans-translation Ala-aminoacylated tmRNA acts like a tRNA, entering the A-site of stalled ribosomes, displacing the stalled mRNA. The ribosome then switches to translate the ORF on the tmRNA; the nascent peptide is terminated with the 'tag peptide' encoded by the tmRNA and targeted for degradation. The ribosome is freed to recommence translation, which seems to be the essential function of trans-translation. In Rickettsia rickettsii, this protein is SsrA-binding protein.